A 355-amino-acid chain; its full sequence is Glycerol-3-phosphate dehydrogenase [NAD(P)+] (355 aa).

NADPH contacts are provided by serine 14, tryptophan 15, arginine 35, and lysine 117. Residues lysine 117, glycine 147, and serine 149 each contribute to the sn-glycerol 3-phosphate site. Alanine 151 is a binding site for NADPH. Positions 202, 255, 265, 266, and 267 each coordinate sn-glycerol 3-phosphate. The active-site Proton acceptor is the lysine 202. Arginine 266 is an NADPH binding site. Residues isoleucine 290 and glutamate 292 each contribute to the NADPH site.

It belongs to the NAD-dependent glycerol-3-phosphate dehydrogenase family.

The protein resides in the cytoplasm. It catalyses the reaction sn-glycerol 3-phosphate + NAD(+) = dihydroxyacetone phosphate + NADH + H(+). It carries out the reaction sn-glycerol 3-phosphate + NADP(+) = dihydroxyacetone phosphate + NADPH + H(+). The protein operates within membrane lipid metabolism; glycerophospholipid metabolism. In terms of biological role, catalyzes the reduction of the glycolytic intermediate dihydroxyacetone phosphate (DHAP) to sn-glycerol 3-phosphate (G3P), the key precursor for phospholipid synthesis. The chain is Glycerol-3-phosphate dehydrogenase [NAD(P)+] from Lawsonia intracellularis (strain PHE/MN1-00).